Consider the following 788-residue polypeptide: E3 ubiquitin-protein ligase SspH2 (788 aa).

The interval 1-481 (MPFHIGSGCL…PGYSGPIIRF (481 aa)) is interaction with host membrane and with target proteins. LRR repeat units follow at residues 223–242 (HITT…ALPP), 243–264 (ELRT…PPGL), 265–282 (LELS…ALPS), 283–302 (GLCK…VLPP), 303–324 (GLQE…PSEL), 325–342 (CKLW…MLPS), 343–364 (GLQE…PSEL), 365–382 (YKLW…ALPS), 383–404 (GLKE…PSEL), 405–422 (KELM…MLPS), 423–445 (GLLS…IHLS), and 446–466 (SETT…QALR). Positions 482 to 491 (DMAGASAPRE) are linker. The segment at 492-788 (TRALHLAAAD…SYLNVQWRRN (297 aa)) is E3 ubiquitin-protein ligase catalytic domain. The 295-residue stretch at 494 to 788 (ALHLAAADWL…SYLNVQWRRN (295 aa)) folds into the NEL domain. C580 functions as the Glycyl thioester intermediate in the catalytic mechanism.

The protein belongs to the LRR-containing bacterial E3 ligase family. Post-translationally, ubiquitinated in the presence of host E1 ubiquitin-activating enzyme UBA1, E2 ubiquitin-conjugating enzyme UBE2D2 and ubiquitin.

The protein resides in the secreted. It is found in the host cytoplasm. It localises to the host apical cell membrane. It carries out the reaction S-ubiquitinyl-[E2 ubiquitin-conjugating enzyme]-L-cysteine + [acceptor protein]-L-lysine = [E2 ubiquitin-conjugating enzyme]-L-cysteine + N(6)-ubiquitinyl-[acceptor protein]-L-lysine.. With respect to regulation, exists in an autoinhibited state in the absence of substrate protein, due to interactions of the leucine-rich repeat domain with the catalytic domain. Is activated upon binding to a substrate protein. Functionally, effector proteins function to alter host cell physiology and promote bacterial survival in host tissues. This protein is an E3 ubiquitin ligase that interferes with host's ubiquitination pathway. The protein is E3 ubiquitin-protein ligase SspH2 (sspH2) of Salmonella typhimurium (strain LT2 / SGSC1412 / ATCC 700720).